The sequence spans 95 residues: MNIRPLHDRVIVKRLEEETKSAGGIVLTGSAAEKSTRGEVVAVGNGRILESGDVRALEVKAGDTVLFGSYVEKVEKIEGQEYLIMREDNILGIVG.

The protein belongs to the GroES chaperonin family. Heptamer of 7 subunits arranged in a ring. Interacts with the chaperonin GroEL.

The protein resides in the cytoplasm. Together with the chaperonin GroEL, plays an essential role in assisting protein folding. The GroEL-GroES system forms a nano-cage that allows encapsulation of the non-native substrate proteins and provides a physical environment optimized to promote and accelerate protein folding. GroES binds to the apical surface of the GroEL ring, thereby capping the opening of the GroEL channel. This Pseudoalteromonas translucida (strain TAC 125) protein is Co-chaperonin GroES.